Reading from the N-terminus, the 268-residue chain is Tryptophan synthase alpha chain (268 aa).

Catalysis depends on proton acceptor residues glutamate 49 and aspartate 60.

The protein belongs to the TrpA family. In terms of assembly, tetramer of two alpha and two beta chains.

The catalysed reaction is (1S,2R)-1-C-(indol-3-yl)glycerol 3-phosphate + L-serine = D-glyceraldehyde 3-phosphate + L-tryptophan + H2O. It participates in amino-acid biosynthesis; L-tryptophan biosynthesis; L-tryptophan from chorismate: step 5/5. Functionally, the alpha subunit is responsible for the aldol cleavage of indoleglycerol phosphate to indole and glyceraldehyde 3-phosphate. This Escherichia coli O6:H1 (strain CFT073 / ATCC 700928 / UPEC) protein is Tryptophan synthase alpha chain.